The sequence spans 105 residues: Putative pterin-4-alpha-carbinolamine dehydratase (105 aa).

Belongs to the pterin-4-alpha-carbinolamine dehydratase family.

The catalysed reaction is (4aS,6R)-4a-hydroxy-L-erythro-5,6,7,8-tetrahydrobiopterin = (6R)-L-erythro-6,7-dihydrobiopterin + H2O. The chain is Putative pterin-4-alpha-carbinolamine dehydratase from Sinorhizobium fredii (strain NBRC 101917 / NGR234).